The chain runs to 158 residues: NADH-quinone oxidoreductase subunit B (158 aa).

Residues Cys-37, Cys-38, Cys-102, and Cys-132 each coordinate [4Fe-4S] cluster.

The protein belongs to the complex I 20 kDa subunit family. As to quaternary structure, NDH-1 is composed of 14 different subunits. Subunits NuoB, C, D, E, F, and G constitute the peripheral sector of the complex. It depends on [4Fe-4S] cluster as a cofactor.

Its subcellular location is the cell inner membrane. It carries out the reaction a quinone + NADH + 5 H(+)(in) = a quinol + NAD(+) + 4 H(+)(out). NDH-1 shuttles electrons from NADH, via FMN and iron-sulfur (Fe-S) centers, to quinones in the respiratory chain. Couples the redox reaction to proton translocation (for every two electrons transferred, four hydrogen ions are translocated across the cytoplasmic membrane), and thus conserves the redox energy in a proton gradient. The sequence is that of NADH-quinone oxidoreductase subunit B from Methylobacillus flagellatus (strain ATCC 51484 / DSM 6875 / VKM B-1610 / KT).